Here is a 310-residue protein sequence, read N- to C-terminus: Methionyl-tRNA formyltransferase (310 aa).

109 to 112 (SLLP) provides a ligand contact to (6S)-5,6,7,8-tetrahydrofolate.

It belongs to the Fmt family.

It carries out the reaction L-methionyl-tRNA(fMet) + (6R)-10-formyltetrahydrofolate = N-formyl-L-methionyl-tRNA(fMet) + (6S)-5,6,7,8-tetrahydrofolate + H(+). Its function is as follows. Attaches a formyl group to the free amino group of methionyl-tRNA(fMet). The formyl group appears to play a dual role in the initiator identity of N-formylmethionyl-tRNA by promoting its recognition by IF2 and preventing the misappropriation of this tRNA by the elongation apparatus. This chain is Methionyl-tRNA formyltransferase, found in Staphylococcus epidermidis (strain ATCC 35984 / DSM 28319 / BCRC 17069 / CCUG 31568 / BM 3577 / RP62A).